The following is a 298-amino-acid chain: ATP phosphoribosyltransferase (298 aa).

This sequence belongs to the ATP phosphoribosyltransferase family. Long subfamily. It depends on Mg(2+) as a cofactor.

The protein localises to the cytoplasm. The catalysed reaction is 1-(5-phospho-beta-D-ribosyl)-ATP + diphosphate = 5-phospho-alpha-D-ribose 1-diphosphate + ATP. It participates in amino-acid biosynthesis; L-histidine biosynthesis; L-histidine from 5-phospho-alpha-D-ribose 1-diphosphate: step 1/9. With respect to regulation, feedback inhibited by histidine. Functionally, catalyzes the condensation of ATP and 5-phosphoribose 1-diphosphate to form N'-(5'-phosphoribosyl)-ATP (PR-ATP). Has a crucial role in the pathway because the rate of histidine biosynthesis seems to be controlled primarily by regulation of HisG enzymatic activity. In Aliivibrio salmonicida (strain LFI1238) (Vibrio salmonicida (strain LFI1238)), this protein is ATP phosphoribosyltransferase.